Here is a 298-residue protein sequence, read N- to C-terminus: 4-hydroxy-tetrahydrodipicolinate synthase (298 aa).

Threonine 51 provides a ligand contact to pyruvate. The active-site Proton donor/acceptor is tyrosine 139. Lysine 167 serves as the catalytic Schiff-base intermediate with substrate. Residue isoleucine 209 participates in pyruvate binding.

The protein belongs to the DapA family. As to quaternary structure, homotetramer; dimer of dimers.

Its subcellular location is the cytoplasm. It carries out the reaction L-aspartate 4-semialdehyde + pyruvate = (2S,4S)-4-hydroxy-2,3,4,5-tetrahydrodipicolinate + H2O + H(+). It functions in the pathway amino-acid biosynthesis; L-lysine biosynthesis via DAP pathway; (S)-tetrahydrodipicolinate from L-aspartate: step 3/4. Its function is as follows. Catalyzes the condensation of (S)-aspartate-beta-semialdehyde [(S)-ASA] and pyruvate to 4-hydroxy-tetrahydrodipicolinate (HTPA). The polypeptide is 4-hydroxy-tetrahydrodipicolinate synthase (Histophilus somni (strain 129Pt) (Haemophilus somnus)).